Reading from the N-terminus, the 404-residue chain is tRNA pseudouridine synthase D (404 aa).

The Nucleophile role is filled by D79. One can recognise a TRUD domain in the interval 154 to 364 (GVPNRFGEQR…MEGERRPLRV (211 aa)).

It belongs to the pseudouridine synthase TruD family.

It carries out the reaction uridine(13) in tRNA = pseudouridine(13) in tRNA. In terms of biological role, responsible for synthesis of pseudouridine from uracil-13 in transfer RNAs. The chain is tRNA pseudouridine synthase D from Geobacter metallireducens (strain ATCC 53774 / DSM 7210 / GS-15).